We begin with the raw amino-acid sequence, 120 residues long: NAD(P)H-quinone oxidoreductase subunit 3 (120 aa).

3 helical membrane passes run 10 to 30 (FLGF…TNLI), 64 to 84 (MFAL…PWAV), and 89 to 109 (LGLL…IALA).

The protein belongs to the complex I subunit 3 family. As to quaternary structure, NDH-1 can be composed of about 15 different subunits; different subcomplexes with different compositions have been identified which probably have different functions.

Its subcellular location is the cellular thylakoid membrane. It catalyses the reaction a plastoquinone + NADH + (n+1) H(+)(in) = a plastoquinol + NAD(+) + n H(+)(out). The enzyme catalyses a plastoquinone + NADPH + (n+1) H(+)(in) = a plastoquinol + NADP(+) + n H(+)(out). In terms of biological role, NDH-1 shuttles electrons from an unknown electron donor, via FMN and iron-sulfur (Fe-S) centers, to quinones in the respiratory and/or the photosynthetic chain. The immediate electron acceptor for the enzyme in this species is believed to be plastoquinone. Couples the redox reaction to proton translocation, and thus conserves the redox energy in a proton gradient. Cyanobacterial NDH-1 also plays a role in inorganic carbon-concentration. This is NAD(P)H-quinone oxidoreductase subunit 3 from Prochlorococcus marinus subsp. pastoris (strain CCMP1986 / NIES-2087 / MED4).